Here is a 398-residue protein sequence, read N- to C-terminus: cAMP-dependent protein kinase type 3 (398 aa).

Phosphoserine is present on residues Ser-15 and Ser-55. The Protein kinase domain maps to 88 to 342; it reads FQILRTLGTG…SEDVKNHPWF (255 aa). ATP contacts are provided by residues 94-102 and Lys-117; that span reads LGTGSFGRV. Asp-211 acts as the Proton acceptor in catalysis. Residues 343–398 enclose the AGC-kinase C-terminal domain; the sequence is NEVIWEKLLARYIETPYEPPIQQGQGDTSQFDRYPEEEFNYGIQGEDPYMDLMKEF.

This sequence belongs to the protein kinase superfamily. AGC Ser/Thr protein kinase family. cAMP subfamily.

The catalysed reaction is L-seryl-[protein] + ATP = O-phospho-L-seryl-[protein] + ADP + H(+). It catalyses the reaction L-threonyl-[protein] + ATP = O-phospho-L-threonyl-[protein] + ADP + H(+). Activated by cAMP. In Saccharomyces cerevisiae (strain ATCC 204508 / S288c) (Baker's yeast), this protein is cAMP-dependent protein kinase type 3 (TPK3).